Here is a 196-residue protein sequence, read N- to C-terminus: UPF0314 protein Oant_0840 (196 aa).

4 consecutive transmembrane segments (helical) span residues Trp-15–Phe-35, Trp-65–Ala-85, Phe-127–Ile-147, and Leu-151–Ile-171.

Belongs to the UPF0314 family.

The protein resides in the cell membrane. This Brucella anthropi (strain ATCC 49188 / DSM 6882 / CCUG 24695 / JCM 21032 / LMG 3331 / NBRC 15819 / NCTC 12168 / Alc 37) (Ochrobactrum anthropi) protein is UPF0314 protein Oant_0840.